Here is a 185-residue protein sequence, read N- to C-terminus: Ribosome-recycling factor (185 aa).

It belongs to the RRF family.

The protein resides in the cytoplasm. Responsible for the release of ribosomes from messenger RNA at the termination of protein biosynthesis. May increase the efficiency of translation by recycling ribosomes from one round of translation to another. The polypeptide is Ribosome-recycling factor (Thermobifida fusca (strain YX)).